A 419-amino-acid chain; its full sequence is Putative zinc metalloprotease M6_Spy1682 (419 aa).

Zn(2+) is bound at residue H18. The active site involves E19. H22 serves as a coordination point for Zn(2+). 4 helical membrane-spanning segments follow: residues 169-191 (LITN…ILLV), 301-323 (LAWS…FSLN), 343-365 (LESV…LIPI), and 392-411 (AYIT…AVTW). Residues 175-274 (GPMNNFILGI…LKTVAVKPQK (100 aa)) form the PDZ domain.

It belongs to the peptidase M50B family. Requires Zn(2+) as cofactor.

The protein resides in the cell membrane. The protein is Putative zinc metalloprotease M6_Spy1682 of Streptococcus pyogenes serotype M6 (strain ATCC BAA-946 / MGAS10394).